The following is a 76-amino-acid chain: Small proline-rich protein 2E (76 aa).

3 repeat units span residues 21–29, 30–38, and 39–47. The interval 21-47 is 3 X 9 AA approximate tandem repeats; sequence KKCPEPCPHPQCPEPCPPPKCPEPCPE. Residues 52–76 form a disordered region; the sequence is PSYQQKCPPVQPPPPCQQKCPPKSK.

It belongs to the cornifin (SPRR) family. Expressed in uterus.

It is found in the cytoplasm. Functionally, cross-linked envelope protein of keratinocytes. It is a keratinocyte protein that first appears in the cell cytosol, but ultimately becomes cross-linked to membrane proteins by transglutaminase. All that results in the formation of an insoluble envelope beneath the plasma membrane. The chain is Small proline-rich protein 2E (Sprr2e) from Mus musculus (Mouse).